The primary structure comprises 1287 residues: DENN domain-containing protein 5A (1287 aa).

A uDENN domain is found at 57–259 (STTEGENFEQ…EVPLPPPGRS (203 aa)). Ser-193 carries the post-translational modification Phosphoserine. The 137-residue stretch at 278-414 (ELPLFDFPVK…LEFVQEVSEI (137 aa)) folds into the cDENN domain. Residues 416–598 (MAFGVPPEGN…IMCHDDDDKD (183 aa)) enclose the dDENN domain. Residues 787–950 (VEENTLIASL…DYFCFTNVFT (164 aa)) form the RUN 1 domain. One can recognise a PLAT domain in the interval 954–1062 (IPYHILIVPS…DDGSLERVLV (109 aa)). Thr-1079 carries the post-translational modification Phosphothreonine. Ser-1085, Ser-1087, and Ser-1096 each carry phosphoserine. The 147-residue stretch at 1134-1280 (TLLLCGECGL…QEFNITLDTS (147 aa)) folds into the RUN 2 domain.

This sequence belongs to the RAB6IP1 family. Interacts with RAB6A bound to GTP. In terms of tissue distribution, expressed in developing brain and developing neurons.

The protein resides in the golgi apparatus membrane. Functionally, guanine nucleotide exchange factor (GEF) which may activate RAB6A and RAB39A and/or RAB39B. Promotes the exchange of GDP to GTP, converting inactive GDP-bound Rab proteins into their active GTP-bound form. Involved in the negative regulation of neurite outgrowth. The polypeptide is DENN domain-containing protein 5A (Dennd5a) (Rattus norvegicus (Rat)).